Consider the following 474-residue polypeptide: 3-isopropylmalate dehydratase large subunit (474 aa).

Positions 353, 414, and 417 each coordinate [4Fe-4S] cluster.

This sequence belongs to the aconitase/IPM isomerase family. LeuC type 1 subfamily. Heterodimer of LeuC and LeuD. [4Fe-4S] cluster is required as a cofactor.

The enzyme catalyses (2R,3S)-3-isopropylmalate = (2S)-2-isopropylmalate. Its pathway is amino-acid biosynthesis; L-leucine biosynthesis; L-leucine from 3-methyl-2-oxobutanoate: step 2/4. Its function is as follows. Catalyzes the isomerization between 2-isopropylmalate and 3-isopropylmalate, via the formation of 2-isopropylmaleate. This is 3-isopropylmalate dehydratase large subunit from Xylella fastidiosa (strain 9a5c).